Here is a 170-residue protein sequence, read N- to C-terminus: Type II secretion system protein H (170 aa).

Positions Met1–Gly5 are cleaved as a propeptide — leader sequence. The residue at position 6 (Phe6) is an N-methylphenylalanine. A helical transmembrane segment spans residues Phe6–Phe29.

The protein belongs to the GSP H family. Type II secretion is composed of four main components: the outer membrane complex, the inner membrane complex, the cytoplasmic secretion ATPase and the periplasm-spanning pseudopilus. Interacts with core component PulG. Post-translationally, cleaved by prepilin peptidase. In terms of processing, methylated by prepilin peptidase at the amino group of the N-terminal phenylalanine once the leader sequence is cleaved by prepilin peptidase.

It localises to the cell inner membrane. In terms of biological role, component of the type II secretion system required for the energy-dependent secretion of extracellular factors such as proteases and toxins from the periplasm. Part of the pseudopilus tip complex that is critical for the recognition and binding of secretion substrates. The sequence is that of Type II secretion system protein H (pulH) from Klebsiella pneumoniae.